We begin with the raw amino-acid sequence, 107 residues long: UPF0145 protein MAB_3451c (107 aa).

It belongs to the UPF0145 family.

This is UPF0145 protein MAB_3451c from Mycobacteroides abscessus (strain ATCC 19977 / DSM 44196 / CCUG 20993 / CIP 104536 / JCM 13569 / NCTC 13031 / TMC 1543 / L948) (Mycobacterium abscessus).